The sequence spans 510 residues: Hepatic triacylglycerol lipase (510 aa).

The N-terminal stretch at 1-21 is a signal peptide; the sequence is MGNPLQISIFLVFCIFIQSSA. An N-linked (GlcNAc...) asparagine glycan is attached at N79. The active-site Nucleophile is S169. D195 (charge relay system) is an active-site residue. The interval 255 to 278 is essential for determining substrate specificity; the sequence is CHFLELYKHIAEHGLNAITQTIKC. Catalysis depends on H280, which acts as the Charge relay system. Residues 353 to 487 form the PLAT domain; that stretch reads YHYQFKIQFI…HPSQEKVFVN (135 aa). An N-linked (GlcNAc...) asparagine glycan is attached at N398.

This sequence belongs to the AB hydrolase superfamily. Lipase family. Homodimer.

The protein resides in the secreted. It catalyses the reaction a triacylglycerol + H2O = a diacylglycerol + a fatty acid + H(+). It carries out the reaction a 1-acyl-sn-glycero-3-phosphocholine + H2O = sn-glycerol 3-phosphocholine + a fatty acid + H(+). The enzyme catalyses a 1,2-diacyl-sn-glycero-3-phosphocholine + H2O = a 2-acyl-sn-glycero-3-phosphocholine + a fatty acid + H(+). The catalysed reaction is 1,2,3-tri-(9Z-octadecenoyl)-glycerol + H2O = di-(9Z)-octadecenoylglycerol + (9Z)-octadecenoate + H(+). It catalyses the reaction 1,2-di-(9Z-octadecenoyl)-sn-glycero-3-phosphocholine + H2O = (9Z-octadecenoyl)-sn-glycero-3-phosphocholine + (9Z)-octadecenoate + H(+). It carries out the reaction 1,2,3-tributanoylglycerol + H2O = dibutanoylglycerol + butanoate + H(+). The enzyme catalyses 1,2-dihexadecanoyl-sn-glycero-3-phosphocholine + H2O = hexadecanoyl-sn-glycero-3-phosphocholine + hexadecanoate + H(+). The catalysed reaction is 1,2-di-(9Z-octadecenoyl)-sn-glycerol + H2O = 2-(9Z-octadecenoyl)-glycerol + (9Z)-octadecenoate + H(+). It catalyses the reaction 1,2,3-tri-(9Z-octadecenoyl)-glycerol + H2O = 2,3-di-(9Z)-octadecenoyl-sn-glycerol + (9Z)-octadecenoate + H(+). It carries out the reaction 1-(9Z-octadecenoyl)-sn-glycero-3-phospho-L-serine + H2O = sn-glycero-3-phospho-L-serine + (9Z)-octadecenoate + H(+). The enzyme catalyses 1-hexadecanoyl-sn-glycero-3-phosphocholine + H2O = sn-glycerol 3-phosphocholine + hexadecanoate + H(+). The catalysed reaction is 1,3-di-(9Z-octadecenoyl)-glycerol + H2O = 3-(9Z-octadecenoyl)-sn-glycerol + (9Z)-octadecenoate + H(+). In terms of biological role, catalyzes the hydrolysis of triglycerides and phospholipids present in circulating plasma lipoproteins, including chylomicrons, intermediate density lipoproteins (IDL), low density lipoproteins (LDL) of large size and high density lipoproteins (HDL), releasing free fatty acids (FFA) and smaller lipoprotein particles. Also exhibits lysophospholipase activity. Can hydrolyze both neutral lipid and phospholipid substrates but shows a greater binding affinity for neutral lipid substrates than phospholipid substrates. In native LDL, preferentially hydrolyzes the phosphatidylcholine species containing polyunsaturated fatty acids at sn-2 position. In Mus musculus (Mouse), this protein is Hepatic triacylglycerol lipase (Lipc).